The sequence spans 652 residues: Probable protein phosphatase 2C 19 (652 aa).

The PPM-type phosphatase domain occupies 265–517 (KYVVSSMQGW…DNTTVILVLF (253 aa)). Mn(2+) contacts are provided by Asp-300, Gly-301, Glu-467, and Asp-508. The interval 524–567 (AVPPVDTDTDTDSHTGDDVDNNDPANEVDPTANAGSDDSNTSDE) is disordered.

The protein belongs to the PP2C family. Requires Mg(2+) as cofactor. The cofactor is Mn(2+).

It carries out the reaction O-phospho-L-seryl-[protein] + H2O = L-seryl-[protein] + phosphate. The catalysed reaction is O-phospho-L-threonyl-[protein] + H2O = L-threonyl-[protein] + phosphate. This is Probable protein phosphatase 2C 19 from Oryza sativa subsp. japonica (Rice).